The sequence spans 157 residues: Eukaryotic translation initiation factor 5A-2 (157 aa).

N-acetylserine is present on Ser2. Ser2 bears the Phosphoserine mark. A Phosphothreonine modification is found at Thr7. Lys51 is modified (hypusine). The residue at position 74 (Ser74) is a Phosphoserine. A Glycyl lysine isopeptide (Lys-Gly) (interchain with G-Cter in ubiquitin) cross-link involves residue Lys86.

This sequence belongs to the eIF-5A family. Homodimer. Binds to 80S ribosomes. Actively translating ribosomes show mutually exclusive binding of eIF5a (HYP2 or ANB1) and EFT1/eEF2. Interacts with DYS1 and LIA1. In terms of processing, lys-51 undergoes hypusination, a unique post-translational modification that consists in the addition of a butylamino group from spermidine to lysine side chain, leading to the formation of the unusual amino acid hypusine. eIF-5As are the only known proteins to undergo this modification, which is essential for their function.

The protein localises to the cytoplasm. Functionally, translation factor that promotes translation elongation and termination, particularly upon ribosome stalling at specific amino acid sequence contexts. Binds between the exit (E) and peptidyl (P) site of the ribosome and promotes rescue of stalled ribosome: specifically required for efficient translation of polyproline-containing peptides as well as other motifs that stall the ribosome. Acts as ribosome quality control (RQC) cofactor by joining the RQC complex to facilitate peptidyl transfer during CAT tailing step. Involved in actin dynamics and cell cycle progression, mRNA decay and probably in a pathway involved in stress response and maintenance of cell wall integrity. The protein is Eukaryotic translation initiation factor 5A-2 (ANB1) of Saccharomyces cerevisiae (strain ATCC 204508 / S288c) (Baker's yeast).